The following is a 115-amino-acid chain: Large ribosomal subunit protein uL22 (115 aa).

Belongs to the universal ribosomal protein uL22 family. In terms of assembly, part of the 50S ribosomal subunit.

Its function is as follows. This protein binds specifically to 23S rRNA; its binding is stimulated by other ribosomal proteins, e.g. L4, L17, and L20. It is important during the early stages of 50S assembly. It makes multiple contacts with different domains of the 23S rRNA in the assembled 50S subunit and ribosome. Functionally, the globular domain of the protein is located near the polypeptide exit tunnel on the outside of the subunit, while an extended beta-hairpin is found that lines the wall of the exit tunnel in the center of the 70S ribosome. The protein is Large ribosomal subunit protein uL22 of Lactiplantibacillus plantarum (strain ATCC BAA-793 / NCIMB 8826 / WCFS1) (Lactobacillus plantarum).